The primary structure comprises 303 residues: Phosphatidylglycerol--prolipoprotein diacylglyceryl transferase (303 aa).

4 helical membrane passes run 18 to 38, 58 to 78, 106 to 126, and 133 to 153; these read LGPF…LVGL, LLPI…VAFE, IWGG…SIIF, and EHFW…QAIG. Arginine 154 is a binding site for a 1,2-diacyl-sn-glycero-3-phospho-(1'-sn-glycerol). 3 helical membrane passes run 193–213, 223–243, and 266–286; these read PTFL…IFLF, LPPG…RFWI, and IAQL…WRIY.

Belongs to the Lgt family.

The protein resides in the cell inner membrane. The catalysed reaction is L-cysteinyl-[prolipoprotein] + a 1,2-diacyl-sn-glycero-3-phospho-(1'-sn-glycerol) = an S-1,2-diacyl-sn-glyceryl-L-cysteinyl-[prolipoprotein] + sn-glycerol 1-phosphate + H(+). It participates in protein modification; lipoprotein biosynthesis (diacylglyceryl transfer). In terms of biological role, catalyzes the transfer of the diacylglyceryl group from phosphatidylglycerol to the sulfhydryl group of the N-terminal cysteine of a prolipoprotein, the first step in the formation of mature lipoproteins. In Prochlorococcus marinus (strain NATL2A), this protein is Phosphatidylglycerol--prolipoprotein diacylglyceryl transferase.